The primary structure comprises 134 residues: Syncollin (134 aa).

The N-terminal stretch at 1 to 21 is a signal peptide; it reads MSPLRPLLLALALASVPCAQG.

Monomer and homooligomer; most probably hexameric. Interacts with GP2. In terms of processing, contains intrachain disulfide bonds.

The protein resides in the zymogen granule membrane. It localises to the zymogen granule lumen. Functions in exocytosis in pancreatic acinar cells regulating the fusion of zymogen granules with each other. May have a pore-forming activity on membranes and regulate exocytosis in other exocrine tissues. This Homo sapiens (Human) protein is Syncollin (SYCN).